The primary structure comprises 199 residues: Large ribosomal subunit protein bL25 (199 aa).

The protein belongs to the bacterial ribosomal protein bL25 family. CTC subfamily. Part of the 50S ribosomal subunit; part of the 5S rRNA/L5/L18/L25 subcomplex. Contacts the 5S rRNA. Binds to the 5S rRNA independently of L5 and L18.

In terms of biological role, this is one of the proteins that binds to the 5S RNA in the ribosome where it forms part of the central protuberance. This is Large ribosomal subunit protein bL25 from Chloroherpeton thalassium (strain ATCC 35110 / GB-78).